Consider the following 271-residue polypeptide: Formamidopyrimidine-DNA glycosylase (271 aa).

Proline 2 serves as the catalytic Schiff-base intermediate with DNA. Glutamate 3 acts as the Proton donor in catalysis. Lysine 58 acts as the Proton donor; for beta-elimination activity in catalysis. The DNA site is built by histidine 92, arginine 111, and arginine 152. An FPG-type zinc finger spans residues 237-271; sequence SVYGREGEACKQCGRVLKHATIGQRATVWCGSCQR. Arginine 261 serves as the catalytic Proton donor; for delta-elimination activity.

The protein belongs to the FPG family. Monomer. It depends on Zn(2+) as a cofactor.

It carries out the reaction Hydrolysis of DNA containing ring-opened 7-methylguanine residues, releasing 2,6-diamino-4-hydroxy-5-(N-methyl)formamidopyrimidine.. The enzyme catalyses 2'-deoxyribonucleotide-(2'-deoxyribose 5'-phosphate)-2'-deoxyribonucleotide-DNA = a 3'-end 2'-deoxyribonucleotide-(2,3-dehydro-2,3-deoxyribose 5'-phosphate)-DNA + a 5'-end 5'-phospho-2'-deoxyribonucleoside-DNA + H(+). Its function is as follows. Involved in base excision repair of DNA damaged by oxidation or by mutagenic agents. Acts as a DNA glycosylase that recognizes and removes damaged bases. Has a preference for oxidized purines, such as 7,8-dihydro-8-oxoguanine (8-oxoG). Has AP (apurinic/apyrimidinic) lyase activity and introduces nicks in the DNA strand. Cleaves the DNA backbone by beta-delta elimination to generate a single-strand break at the site of the removed base with both 3'- and 5'-phosphates. In Xanthomonas euvesicatoria pv. vesicatoria (strain 85-10) (Xanthomonas campestris pv. vesicatoria), this protein is Formamidopyrimidine-DNA glycosylase.